The sequence spans 428 residues: PGL/p-HBAD biosynthesis glycosyltransferase MRA_2985 (428 aa).

Residues 1–23 (MEETSVAGDPGPDAGTSTAPNAA) are disordered.

The protein belongs to the UDP-glycosyltransferase family.

Involved in glycosylation steps downstream of mono-O-methyl-glycosyl-p-hydroxybenzoic acid derivative (p-HBAD I) and 2-O-methyl-rhamnosyl-phenolphthiocerol dimycocerosate (mycoside B) during the p-hydroxybenzoic acid derivatives (p-HBAD) and glycosylated phenolphthiocerol dimycocerosates (PGL) biosynthesis. This Mycobacterium tuberculosis (strain ATCC 25177 / H37Ra) protein is PGL/p-HBAD biosynthesis glycosyltransferase MRA_2985.